A 505-amino-acid chain; its full sequence is ATP synthase subunit alpha, chloroplastic (505 aa).

Residue 170 to 177 (GDRQTGKT) participates in ATP binding.

The protein belongs to the ATPase alpha/beta chains family. F-type ATPases have 2 components, CF(1) - the catalytic core - and CF(0) - the membrane proton channel. CF(1) has five subunits: alpha(3), beta(3), gamma(1), delta(1), epsilon(1). CF(0) has four main subunits: a, b, b' and c.

It localises to the plastid. Its subcellular location is the chloroplast thylakoid membrane. The catalysed reaction is ATP + H2O + 4 H(+)(in) = ADP + phosphate + 5 H(+)(out). Its function is as follows. Produces ATP from ADP in the presence of a proton gradient across the membrane. The alpha chain is a regulatory subunit. The polypeptide is ATP synthase subunit alpha, chloroplastic (Oenothera parviflora (Small-flowered evening primrose)).